A 192-amino-acid chain; its full sequence is GTP cyclohydrolase-2 (192 aa).

50–54 is a GTP binding site; sequence RLHSE. The Zn(2+) site is built by C55, C66, and C68. GTP-binding positions include 92–94 and T114; that span reads EGR. The active-site Proton acceptor is D126. The active-site Nucleophile is R128. GTP is bound by residues T149 and K154.

This sequence belongs to the GTP cyclohydrolase II family. Requires Zn(2+) as cofactor.

It carries out the reaction GTP + 4 H2O = 2,5-diamino-6-hydroxy-4-(5-phosphoribosylamino)-pyrimidine + formate + 2 phosphate + 3 H(+). Its pathway is cofactor biosynthesis; riboflavin biosynthesis; 5-amino-6-(D-ribitylamino)uracil from GTP: step 1/4. Its function is as follows. Catalyzes the conversion of GTP to 2,5-diamino-6-ribosylamino-4(3H)-pyrimidinone 5'-phosphate (DARP), formate and pyrophosphate. The polypeptide is GTP cyclohydrolase-2 (Helicobacter pylori (strain J99 / ATCC 700824) (Campylobacter pylori J99)).